Consider the following 1410-residue polypeptide: MPPHPNTTKENIPSLVKATPGAQSLRWMLLFAFLCSLVGNAYGTHHQHHGHQHLHHQVRDVKASATPTVTSSSSSSLPSTLEEAKEIIKNAQASLAVMNKGRLAYPQWNQYIAQPKSKNGTSPVAPALGTEHLATNHAMIAKIALNESKTEDQSSQKFSYTIPSGVAHAAKLVAEASPQSPGSHGVDIAAIRRKYRPQRNDTNRPAQKYAQSNGLDGYVHAQAPMNSALDSDSGDDESQLTKRSSADFWLTTMTQRGSSPYAPEGYKVWRNVKEYGAKGDGVTDDTAAINLAVSDGGRCGADCGSSTIYPAQVYFPPGTYLVSSPIIQYFNTEFLGNPLDYPTILAASSFVGLGVITSDVYTGDTTEWYINTNNFLRSVRNFNVDVTRTPQDAYVCGIHWQVAQGTSLENMVFYMSQDAATTQQGVYMENGSGGFITNLTFVGGNFGAYFGNQQFTTSELTFINAKNALQVHWDWAWTMQDVIIENCVNGLVIVGGAGGSMSTGQSVGSLILMDALIVNATNGIVTSLFAENSTSFLLQNSVFRDVTTAVLDSAQGTEILAGGAAFGVESWGFGRVATSSTNSTFYNGQDIPVMERPVSLTYMGYDKPNFFQRRRPAYTNIGNTQIIDVKEWGAAGDGTTNDGPILNSILDRAANLSAIVFIPHGIYIVEDTLHIPVGSRIIGQAWSQIMMKGSKFENQLKPRVGVQVGQVGDVGIIEIQSLLFTVSGPTAGAVLVEWNVHQSTQGSAAMWDSHFRVGGAKGSSLQTSQCDKSDTAVNTACVAASLLLHITSQSSAYLENIWAWTADHDLDTTAQEQINIYSGRGILVESQGPTWLYGTSSEHNVLYQYQVSNAKDLYMGMIQTESPYFQPTPHAPQPFKAGLFSNDPVFADCDSSSANCFASWALRIIDSSSVYIMGTEDCQQRAFEISQSTDTWIYNLVTKGIVEMISPVNEDPTLAANNVNGFMSSILAWVRGSNSTIGERTFPGFQIYTADSLEGQGLTESCTPALTQKVLCSPFLKTWTSPGIGQYYKNTTFTDMLCDAGCGESLGSYVDNVETYCANQTIGSSIPTRNGGTIYHNYNLTCLEDKDTKEYCLDTIMDFTTVESAKDMPTNELCSYCYTTMLEMRQASIYSSYTESDKETLELIQSTCGLTGPTELHDPPYTVTPTPDPVCVSNTTYTTQPGDTCDKLAKQYSVASAAILYANPTIIGNCSDLPASRDICMPLGCDTQYTLQDDDNCWQLQRDYGLGPDSIRQYNPWLDSDCLNMQGAREILGSVLCLSPQGATHNTTGDGITTTPGNGEYAQGVVSPPENSTVAPGTTTKCGRWYSATADDLCVQICLKSGVSAKLFKAANPSLAADCDNSLIAGDAYCVGPVPRWNDTAYWIETATSSKAVSTPLASAKATGSV.

LysM domains lie at 1179–1225 (TTYT…DICM) and 1231–1277 (TQYT…EILG). Residues 1291 to 1303 (TTGDGITTTPGNG) show a composition bias toward low complexity. The interval 1291-1317 (TTGDGITTTPGNGEYAQGVVSPPENST) is disordered. The LysM 3 domain occupies 1328–1375 (RWYSATADDLCVQICLKSGVSAKLFKAANPSLAADCDNSLIAGDAYCV).

It belongs to the secreted LysM effector family.

Its function is as follows. Non-secreted LysM effector that might be involved in manipulation of host defenses for successful infection. The protein is Non-secreted LysM effector LysM15 of Penicillium expansum (Blue mold rot fungus).